The primary structure comprises 145 residues: Phospholipase A2 phospholipin (145 aa).

A signal peptide spans 1 to 15 (MVDLARRCSGSTEGR). Positions 24, 26, and 28 each coordinate Ca(2+). 5 disulfides stabilise this stretch: Cys-25-Cys-46, Cys-45-Cys-84, Cys-52-Cys-77, Cys-75-Cys-116, and Cys-121-Cys-132. His-49 is an active-site residue. Asp-50 is a binding site for Ca(2+). Residues 124–128 (KRSGR) constitute a propeptide that is removed on maturation.

The protein belongs to the phospholipase A2 family. Group III subfamily. In terms of assembly, heterodimer composed of a small subunit and a large subunit; disulfid-linked. Ca(2+) serves as cofactor. In terms of tissue distribution, expressed by the venom gland.

Its subcellular location is the secreted. The catalysed reaction is a 1,2-diacyl-sn-glycero-3-phosphocholine + H2O = a 1-acyl-sn-glycero-3-phosphocholine + a fatty acid + H(+). Functionally, scorpion venom phospholipase A2 (PLA2) that contains enzymatic activity, but does not inhibit ryanodine receptors in contrary to imperatoxin-1, another heterodimer of P.imperator venom. PLA2 catalyzes the calcium-dependent hydrolysis of the 2-acyl groups in 3-sn-phosphoglycerides. The protein is Phospholipase A2 phospholipin of Pandinus imperator (Emperor scorpion).